The following is a 115-amino-acid chain: Large ribosomal subunit protein uL24 (115 aa).

The protein belongs to the universal ribosomal protein uL24 family. In terms of assembly, part of the 50S ribosomal subunit.

Its function is as follows. One of two assembly initiator proteins, it binds directly to the 5'-end of the 23S rRNA, where it nucleates assembly of the 50S subunit. In terms of biological role, one of the proteins that surrounds the polypeptide exit tunnel on the outside of the subunit. The chain is Large ribosomal subunit protein uL24 from Phytoplasma mali (strain AT).